The sequence spans 212 residues: Glycerol-3-phosphate acyltransferase (212 aa).

A run of 4 helical transmembrane segments spans residues 3-23 (ILLAALVAYLIGSVSFAVVVS), 78-98 (DVAVACVAIAVFLGHLYPVFF), 115-135 (AVHPVLGLATALTWLIVAFFF), and 155-177 (FLFGTSHNPVAWAVLAMSVLLVW).

The protein belongs to the PlsY family. In terms of assembly, probably interacts with PlsX.

The protein resides in the cell inner membrane. The enzyme catalyses an acyl phosphate + sn-glycerol 3-phosphate = a 1-acyl-sn-glycero-3-phosphate + phosphate. It participates in lipid metabolism; phospholipid metabolism. Functionally, catalyzes the transfer of an acyl group from acyl-phosphate (acyl-PO(4)) to glycerol-3-phosphate (G3P) to form lysophosphatidic acid (LPA). This enzyme utilizes acyl-phosphate as fatty acyl donor, but not acyl-CoA or acyl-ACP. The sequence is that of Glycerol-3-phosphate acyltransferase from Burkholderia ambifaria (strain ATCC BAA-244 / DSM 16087 / CCUG 44356 / LMG 19182 / AMMD) (Burkholderia cepacia (strain AMMD)).